The sequence spans 248 residues: ATP synthase subunit a, chloroplastic (248 aa).

Transmembrane regions (helical) follow at residues A37–A57, V96–L116, D134–L154, L200–L220, and G221–G241.

This sequence belongs to the ATPase A chain family. In terms of assembly, F-type ATPases have 2 components, CF(1) - the catalytic core - and CF(0) - the membrane proton channel. CF(1) has five subunits: alpha(3), beta(3), gamma(1), delta(1), epsilon(1). CF(0) has four main subunits: a, b, b' and c.

The protein resides in the plastid. It is found in the chloroplast thylakoid membrane. Its function is as follows. Key component of the proton channel; it plays a direct role in the translocation of protons across the membrane. The polypeptide is ATP synthase subunit a, chloroplastic (Anthoceros angustus (Hornwort)).